The chain runs to 229 residues: GTP cyclohydrolase 1 (229 aa).

The interval 1–21 is disordered; sequence MTLAKPGSGSQSRMDDKAHFK. Zn(2+)-binding residues include C116, H119, and C187.

The protein belongs to the GTP cyclohydrolase I family. In terms of assembly, toroid-shaped homodecamer, composed of two pentamers of five dimers.

It catalyses the reaction GTP + H2O = 7,8-dihydroneopterin 3'-triphosphate + formate + H(+). It functions in the pathway cofactor biosynthesis; 7,8-dihydroneopterin triphosphate biosynthesis; 7,8-dihydroneopterin triphosphate from GTP: step 1/1. The chain is GTP cyclohydrolase 1 from Synechococcus sp. (strain JA-2-3B'a(2-13)) (Cyanobacteria bacterium Yellowstone B-Prime).